The chain runs to 404 residues: Cysteine desulfurase IscS (404 aa).

Pyridoxal 5'-phosphate-binding positions include 75–76, Asn155, Gln183, and 203–205; these read AT and SAH. Residue Lys206 is modified to N6-(pyridoxal phosphate)lysine. Position 243 (Thr243) interacts with pyridoxal 5'-phosphate. Cys328 (cysteine persulfide intermediate) is an active-site residue. Residue Cys328 coordinates [2Fe-2S] cluster.

It belongs to the class-V pyridoxal-phosphate-dependent aminotransferase family. NifS/IscS subfamily. As to quaternary structure, homodimer. Forms a heterotetramer with IscU, interacts with other sulfur acceptors. It depends on pyridoxal 5'-phosphate as a cofactor.

Its subcellular location is the cytoplasm. The catalysed reaction is (sulfur carrier)-H + L-cysteine = (sulfur carrier)-SH + L-alanine. It functions in the pathway cofactor biosynthesis; iron-sulfur cluster biosynthesis. Its function is as follows. Master enzyme that delivers sulfur to a number of partners involved in Fe-S cluster assembly, tRNA modification or cofactor biosynthesis. Catalyzes the removal of elemental sulfur atoms from cysteine to produce alanine. Functions as a sulfur delivery protein for Fe-S cluster synthesis onto IscU, an Fe-S scaffold assembly protein, as well as other S acceptor proteins. The protein is Cysteine desulfurase IscS of Pseudomonas putida (strain GB-1).